Consider the following 293-residue polypeptide: Protein transport protein yif1 (293 aa).

Topologically, residues 1–139 (MPPKLYHPQP…PPAEDLNSPD (139 aa)) are cytoplasmic. A helical membrane pass occupies residues 140-160 (MYIPLMAFTTHILLLCALAGL). Residues 161–175 (QDDFQPELFGLRASK) lie on the Lumenal side of the membrane. The chain crosses the membrane as a helical span at residues 176–196 (ACAVVLVEFLATRLGCYLLNI). Over 197–201 (SSQSQ) the chain is Cytoplasmic. A helical membrane pass occupies residues 202–222 (VLDLLAFSGYKFVGLILTSLS). Residues 223-226 (KLFE) lie on the Lumenal side of the membrane. The helical transmembrane segment at 227-247 (MPWVTRFVFLYMYLATAFFLL) threads the bilayer. Over 248 to 271 (RSLKYAVLPESTMAINATITSHQR) the chain is Cytoplasmic. A helical membrane pass occupies residues 272–292 (SRRIYFLFFIAASQILFMYVL). A topological domain (lumenal) is located at residue Ser-293.

The protein belongs to the YIF1 family. As to quaternary structure, component of the yip1-yif1 complex, composed of at least yif1, yip1 and yos1. The complex interacts with the ER to Golgi SNAREs bos1 and sec22.

The protein localises to the endoplasmic reticulum membrane. It is found in the golgi apparatus membrane. Its subcellular location is the cytoplasmic vesicle. It localises to the COPII-coated vesicle. In terms of biological role, required for fusion of ER-derived vesicles with the Golgi during ER-to-Golgi protein transport. May be involved in proper membrane localization of Rab GTPases. In Schizosaccharomyces pombe (strain 972 / ATCC 24843) (Fission yeast), this protein is Protein transport protein yif1.